A 140-amino-acid polypeptide reads, in one-letter code: 3-hydroxyacyl-[acyl-carrier-protein] dehydratase FabZ (140 aa).

The active site involves histidine 48.

It belongs to the thioester dehydratase family. FabZ subfamily.

It is found in the cytoplasm. The enzyme catalyses a (3R)-hydroxyacyl-[ACP] = a (2E)-enoyl-[ACP] + H2O. Its function is as follows. Involved in unsaturated fatty acids biosynthesis. Catalyzes the dehydration of short chain beta-hydroxyacyl-ACPs and long chain saturated and unsaturated beta-hydroxyacyl-ACPs. This chain is 3-hydroxyacyl-[acyl-carrier-protein] dehydratase FabZ, found in Exiguobacterium sibiricum (strain DSM 17290 / CCUG 55495 / CIP 109462 / JCM 13490 / 255-15).